The chain runs to 467 residues: MDTAGIRLTPKEIVSKLNEYIVGQNDAKRKVAIALRNRYRRSLLDEESKQEISPKNILMIGPTGVGKTEIARRMAKVVGAPFIKVEATKFTELGYVGRDVESMVRDLVDVSVRLVKAQKKSLVQDEATAKANEKLVKLLVPSMKKKASQTNNPLESLFGGAIPNFGQNNEDEEEPPTEEIKTKRSEIKRQLEEGKLEKEKVRIKVEQDPGALGMLGTNQNQQMQEMMNQLMPKKKVEREVAVETARKILADSYADELIDQESANQEALELAEQMGIIFIDEIDKVATNNHNSGQDVSRQGVQRDILPILEGSVIQTKYGTVNTEHMLFIGAGAFHVSKPSDLIPELQGRFPIRVELDSLSVEDFVRILTEPKLSLIKQYEALLQTEEVTVNFTDEAITRLAEIAYQVNQDTDNIGARRLHTILEKMLEDLSFEAPSMPNAVVDITPQYVDDKLKSISTNKDLSAFIL.

Residues valine 22 and 64 to 69 (GVGKTE) each bind ATP. A disordered region spans residues 149 to 192 (QTNNPLESLFGGAIPNFGQNNEDEEEPPTEEIKTKRSEIKRQLE). A compositionally biased stretch (basic and acidic residues) spans 178–192 (EEIKTKRSEIKRQLE). ATP contacts are provided by aspartate 280, glutamate 345, and arginine 417.

It belongs to the ClpX chaperone family. HslU subfamily. As to quaternary structure, a double ring-shaped homohexamer of HslV is capped on each side by a ring-shaped HslU homohexamer. The assembly of the HslU/HslV complex is dependent on binding of ATP.

The protein resides in the cytoplasm. In terms of biological role, ATPase subunit of a proteasome-like degradation complex; this subunit has chaperone activity. The binding of ATP and its subsequent hydrolysis by HslU are essential for unfolding of protein substrates subsequently hydrolyzed by HslV. HslU recognizes the N-terminal part of its protein substrates and unfolds these before they are guided to HslV for hydrolysis. The sequence is that of ATP-dependent protease ATPase subunit HslU from Staphylococcus aureus (strain Mu3 / ATCC 700698).